Consider the following 1087-residue polypeptide: DYRK-family kinase pom1 (1087 aa).

Disordered stretches follow at residues 57-81, 120-182, 238-308, and 336-578; these read CPNRQSSSSTAADTSPSTNASNTNI, LLRS…SKSF, MAPK…LSTI, and NHSH…PSLS. Residues 62–81 are compositionally biased toward low complexity; that stretch reads SSSSTAADTSPSTNASNTNI. Polar residues-rich tracts occupy residues 132–165 and 246–256; these read KNSPRNSIHRLSNISIGNNPIDFESSQQNNPSSL and WRHTNFHSTSH. Over residues 292-307 the composition is skewed to low complexity; it reads SGSLTKSSSESKNLST. Polar residues predominate over residues 336–361; it reads NHSHVGSQTKSHSFATPSVFDNNKPV. Residues 362–373 show a composition bias toward low complexity; it reads SSDNHNNTTTSS. The span at 397–407 shows a compositional bias: basic and acidic residues; sequence VDGHRNHEAKH. The span at 429-442 shows a compositional bias: low complexity; the sequence is RGGFFSRLSFSRSS. The segment covering 478-488 has biased composition (basic residues); the sequence is NGKKTPTRTKS. Phosphoserine is present on Ser-513. Over residues 527-536 the composition is skewed to basic and acidic residues; the sequence is VSREPEKPEE. Residues 555 to 578 show a composition bias toward polar residues; that stretch reads QQRSVSYTPKRSSDTSESLQPSLS. One can recognise a Protein kinase domain in the interval 699-995; sequence YEVVDFLGKG…PQQAAQHDFL (297 aa). ATP-binding positions include 705 to 713 and Lys-728; that span reads LGKGSFGQV. The active-site Proton acceptor is the Asp-825. Disordered stretches follow at residues 992–1011 and 1017–1056; these read HDFLTGKQDVRRPNTAPARQ and PNIETAPIPRPLPNLPMEYNDHTLPSPKEPSNQASNLVRS. The span at 1045 to 1055 shows a compositional bias: polar residues; it reads EPSNQASNLVR.

It belongs to the protein kinase superfamily. CMGC Ser/Thr protein kinase family. MNB/DYRK subfamily. As to quaternary structure, interacts with rga4. Interacts with tea4; this interaction triggers pom1 plasma membrane association. Autophosphorylates at the cell cortex to lower lipid affinity and promote membrane release. Dephosphorylation by dis2, regulated by tea4, triggers membrane association.

It localises to the cell tip. The protein resides in the cell membrane. The catalysed reaction is L-seryl-[protein] + ATP = O-phospho-L-seryl-[protein] + ADP + H(+). It carries out the reaction L-threonyl-[protein] + ATP = O-phospho-L-threonyl-[protein] + ADP + H(+). It catalyses the reaction L-tyrosyl-[protein] + ATP = O-phospho-L-tyrosyl-[protein] + ADP + H(+). In terms of biological role, polarity factor involved in localization of polarized growth and cytokinesis. Forms an intracellular gradient that serves to measure cell length and control mitotic entry. Controls the timing of mitotic commitment by regulating the inhibitory impact of cdr1/cdr2 on wee1 activity. Directly phosphorylates the tail of cdr2 which inhibits cdr2 activation by ssp1. Cdr2 phosphorylation by pom1 also modulates cdr2 association with membranes and inhibits cdr2 interaction with mid1, reducing its clustering ability, possibly via the down-regulation of cdr2 kinase activity. Acts as a negative regulator of mid1 distribution, excluding mid1 from non-growing ends, which prevents division-septum assembly at the cell ends. The pom1 polar gradient also mediates mitotic entry by regulating cdk1. Plays an essential role in proper localization and phosphorylation of a GAP for cdc42, rga4, which ensures bipolar localization of GTP-bound, active cdc42 involved in F-actin formation. Phosphorylates multiple other substrates that function in polarized cell growth, including tea4, mod5, pal1, the Rho GAP rga7, and the Arf GEF syt22. The chain is DYRK-family kinase pom1 from Schizosaccharomyces pombe (strain 972 / ATCC 24843) (Fission yeast).